Reading from the N-terminus, the 795-residue chain is Lon protease (795 aa).

The 207-residue stretch at 7 to 213 folds into the Lon N-terminal domain; it reads SQILVVRGQV…KIIQAGIEDL (207 aa). 379–386 provides a ligand contact to ATP; sequence GPPGVGKS. A Lon proteolytic domain is found at 615–795; that stretch reads VSLPGIVNGM…YSDIYNKLFS (181 aa). Catalysis depends on residues S702 and K745.

It belongs to the peptidase S16 family. Homohexamer. Organized in a ring with a central cavity.

It localises to the cytoplasm. It catalyses the reaction Hydrolysis of proteins in presence of ATP.. ATP-dependent serine protease that mediates the selective degradation of mutant and abnormal proteins as well as certain short-lived regulatory proteins. Required for cellular homeostasis and for survival from DNA damage and developmental changes induced by stress. Degrades polypeptides processively to yield small peptide fragments that are 5 to 10 amino acids long. Binds to DNA in a double-stranded, site-specific manner. In Mycoplasma genitalium (strain ATCC 33530 / DSM 19775 / NCTC 10195 / G37) (Mycoplasmoides genitalium), this protein is Lon protease.